A 154-amino-acid polypeptide reads, in one-letter code: MKAIVQVRGEVNQEQGVRDTLEMLNLDRVNHATLVPETDAYDGMVTKVNDWVAHGEPSADVVATLIERRAEPAAGEGDIDDEWVADNTDYDGVEALAEALVDEETTLQEAGVSPTLRLHPPRGGHDGIKHPTKEGGQLGKHTTEEIDTLLEAMR.

Positions 114 to 139 (PTLRLHPPRGGHDGIKHPTKEGGQLG) are disordered. Positions 123–133 (GGHDGIKHPTK) are enriched in basic and acidic residues.

The protein belongs to the universal ribosomal protein uL30 family. Part of the 50S ribosomal subunit.

This Natronomonas pharaonis (strain ATCC 35678 / DSM 2160 / CIP 103997 / JCM 8858 / NBRC 14720 / NCIMB 2260 / Gabara) (Halobacterium pharaonis) protein is Large ribosomal subunit protein uL30.